Consider the following 427-residue polypeptide: Serine--tRNA ligase (427 aa).

230-232 (TAE) contacts L-serine. 261–263 (RAE) contributes to the ATP binding site. Glutamate 284 contacts L-serine. 348-351 (EISS) contributes to the ATP binding site. Serine 384 is a binding site for L-serine.

Belongs to the class-II aminoacyl-tRNA synthetase family. Type-1 seryl-tRNA synthetase subfamily. Homodimer. The tRNA molecule binds across the dimer.

It is found in the cytoplasm. It catalyses the reaction tRNA(Ser) + L-serine + ATP = L-seryl-tRNA(Ser) + AMP + diphosphate + H(+). The catalysed reaction is tRNA(Sec) + L-serine + ATP = L-seryl-tRNA(Sec) + AMP + diphosphate + H(+). The protein operates within aminoacyl-tRNA biosynthesis; selenocysteinyl-tRNA(Sec) biosynthesis; L-seryl-tRNA(Sec) from L-serine and tRNA(Sec): step 1/1. Its function is as follows. Catalyzes the attachment of serine to tRNA(Ser). Is also able to aminoacylate tRNA(Sec) with serine, to form the misacylated tRNA L-seryl-tRNA(Sec), which will be further converted into selenocysteinyl-tRNA(Sec). This Syntrophomonas wolfei subsp. wolfei (strain DSM 2245B / Goettingen) protein is Serine--tRNA ligase.